A 617-amino-acid chain; its full sequence is Dihydroxy-acid dehydratase (617 aa).

Asp-81 contributes to the Mg(2+) binding site. Residue Cys-122 participates in [2Fe-2S] cluster binding. The Mg(2+) site is built by Asp-123 and Lys-124. N6-carboxylysine is present on Lys-124. Cys-195 contributes to the [2Fe-2S] cluster binding site. Position 491 (Glu-491) interacts with Mg(2+). Ser-517 acts as the Proton acceptor in catalysis.

It belongs to the IlvD/Edd family. In terms of assembly, homodimer. [2Fe-2S] cluster is required as a cofactor. Requires Mg(2+) as cofactor.

It catalyses the reaction (2R)-2,3-dihydroxy-3-methylbutanoate = 3-methyl-2-oxobutanoate + H2O. The enzyme catalyses (2R,3R)-2,3-dihydroxy-3-methylpentanoate = (S)-3-methyl-2-oxopentanoate + H2O. It participates in amino-acid biosynthesis; L-isoleucine biosynthesis; L-isoleucine from 2-oxobutanoate: step 3/4. The protein operates within amino-acid biosynthesis; L-valine biosynthesis; L-valine from pyruvate: step 3/4. In terms of biological role, functions in the biosynthesis of branched-chain amino acids. Catalyzes the dehydration of (2R,3R)-2,3-dihydroxy-3-methylpentanoate (2,3-dihydroxy-3-methylvalerate) into 2-oxo-3-methylpentanoate (2-oxo-3-methylvalerate) and of (2R)-2,3-dihydroxy-3-methylbutanoate (2,3-dihydroxyisovalerate) into 2-oxo-3-methylbutanoate (2-oxoisovalerate), the penultimate precursor to L-isoleucine and L-valine, respectively. This chain is Dihydroxy-acid dehydratase, found in Buchnera aphidicola subsp. Acyrthosiphon pisum (strain 5A).